A 301-amino-acid chain; its full sequence is DNA repair protein RecO (301 aa).

The disordered stretch occupies residues 272–301 (PTPSGQGSPVAAAAFSEEDSETLGSNLKKL).

This sequence belongs to the RecO family.

Its function is as follows. Involved in DNA repair and RecF pathway recombination. The sequence is that of DNA repair protein RecO from Synechococcus sp. (strain JA-3-3Ab) (Cyanobacteria bacterium Yellowstone A-Prime).